We begin with the raw amino-acid sequence, 371 residues long: N-acetyldiaminopimelate deacetylase (371 aa).

Residue Asp68 is part of the active site. The Proton acceptor role is filled by Glu127.

The protein belongs to the peptidase M20A family. N-acetyldiaminopimelate deacetylase subfamily.

It carries out the reaction N-acetyl-(2S,6S)-2,6-diaminopimelate + H2O = (2S,6S)-2,6-diaminopimelate + acetate. It participates in amino-acid biosynthesis; L-lysine biosynthesis via DAP pathway; LL-2,6-diaminopimelate from (S)-tetrahydrodipicolinate (acetylase route): step 3/3. Its function is as follows. Catalyzes the conversion of N-acetyl-diaminopimelate to diaminopimelate and acetate. This is N-acetyldiaminopimelate deacetylase from Listeria monocytogenes serotype 4a (strain HCC23).